Consider the following 457-residue polypeptide: 6-phosphofructo-2-kinase/fructose-2,6-bisphosphatase (457 aa).

The tract at residues 1 to 20 (MEIPPGLETTKRKVAHSDEH) is disordered. Residues 1-244 (MEIPPGLETT…VYFLMNIHLL (244 aa)) are 6-phosphofructo-2-kinase. Over residues 9–20 (TTKRKVAHSDEH) the composition is skewed to basic and acidic residues. Residue 36 to 44 (GLPARGKTY) participates in ATP binding. R69 and R98 together coordinate beta-D-fructose 6-phosphate. The active site involves D124. 2 residues coordinate beta-D-fructose 6-phosphate: T126 and R132. The active site involves C154. An ATP-binding site is contributed by 163 to 168 (NVTDVK). Residues K168, R190, and Y194 each coordinate beta-D-fructose 6-phosphate. Residues 245–457 (PRSIYLTRHG…QLPLCDSPRD (213 aa)) are fructose-2,6-bisphosphatase. Residue R252 coordinates beta-D-fructose 2,6-bisphosphate. The active-site Tele-phosphohistidine intermediate is the H253. The beta-D-fructose 2,6-bisphosphate site is built by N259 and G265. The active-site Proton donor/acceptor is the E324. Residues Y335, R349, K353, Y364, Q390, and R394 each contribute to the beta-D-fructose 2,6-bisphosphate site. Residue 346 to 349 (ADDR) participates in ATP binding. Residues 390–394 (QAVLR) and Y426 each bind ATP.

It in the C-terminal section; belongs to the phosphoglycerate mutase family.

It catalyses the reaction beta-D-fructose 2,6-bisphosphate + H2O = beta-D-fructose 6-phosphate + phosphate. It carries out the reaction beta-D-fructose 6-phosphate + ATP = beta-D-fructose 2,6-bisphosphate + ADP + H(+). Synthesis and degradation of fructose 2,6-bisphosphate. The sequence is that of 6-phosphofructo-2-kinase/fructose-2,6-bisphosphatase from Caenorhabditis elegans.